A 148-amino-acid chain; its full sequence is Arginine repressor (148 aa).

This sequence belongs to the ArgR family.

It localises to the cytoplasm. It functions in the pathway amino-acid biosynthesis; L-arginine biosynthesis [regulation]. Functionally, regulates arginine biosynthesis genes. In Chlorobium phaeovibrioides (strain DSM 265 / 1930) (Prosthecochloris vibrioformis (strain DSM 265)), this protein is Arginine repressor.